A 694-amino-acid chain; its full sequence is E3 ubiquitin-protein ligase SPL11 (694 aa).

Over residues 1–12 (MAGDRAEEEEGE) the composition is skewed to acidic residues. Disordered stretches follow at residues 1–21 (MAGD…ARAA) and 343–363 (NGME…ACSS). In terms of domain architecture, U-box spans 272 to 346 (TIPDEFRCPI…SQWCETNGME (75 aa)). Over residues 350 to 363 (RSTQPNKPTPACSS) the composition is skewed to polar residues. ARM repeat units lie at residues 398-438 (NANN…NLSI), 439-479 (HEDN…SLSV), 480-520 (IDEY…NLCI), 521-561 (YQGN…ILSS), 562-602 (HPEG…HLCS), and 603-650 (GEHH…FLVQ). A compositionally biased stretch (low complexity) spans 650–667 (QQQEEQESQSQASAQVPP). A disordered region spans residues 650-694 (QQQEEQESQSQASAQVPPQATPEQVPENDIPEQLDSPASQYPMVV).

As to quaternary structure, interacts with SPIN1 (via N-terminus). Highly expressed in leaf, at intermediate levels in shoot and weakly in root.

It is found in the nucleus. Its subcellular location is the cytoplasm. It catalyses the reaction S-ubiquitinyl-[E2 ubiquitin-conjugating enzyme]-L-cysteine + [acceptor protein]-L-lysine = [E2 ubiquitin-conjugating enzyme]-L-cysteine + N(6)-ubiquitinyl-[acceptor protein]-L-lysine.. Its pathway is protein modification; protein ubiquitination. E3 ubiquitin-protein ligase that negatively regulates programmed cell death and disease resistance. Participates in flowering time control by mediating ubiquitination and subsequent proteasomal degradation of SPIN1. The chain is E3 ubiquitin-protein ligase SPL11 (SPL11) from Oryza sativa subsp. japonica (Rice).